Reading from the N-terminus, the 159-residue chain is 3-dehydroquinate dehydratase (159 aa).

The active-site Proton acceptor is the Y22. Residues N73, H79, and D86 each contribute to the substrate site. The active-site Proton donor is H99. Substrate is bound by residues 100 to 101 (IS) and R110.

It belongs to the type-II 3-dehydroquinase family. In terms of assembly, homododecamer.

It carries out the reaction 3-dehydroquinate = 3-dehydroshikimate + H2O. The protein operates within metabolic intermediate biosynthesis; chorismate biosynthesis; chorismate from D-erythrose 4-phosphate and phosphoenolpyruvate: step 3/7. In terms of biological role, catalyzes a trans-dehydration via an enolate intermediate. The sequence is that of 3-dehydroquinate dehydratase from Campylobacter jejuni subsp. doylei (strain ATCC BAA-1458 / RM4099 / 269.97).